The sequence spans 431 residues: Putative malic acid transport protein (431 aa).

10 consecutive transmembrane segments (helical) span residues 30–50, 62–82, 101–121, 136–156, 167–187, 201–221, 239–259, 284–304, 318–338, and 346–366; these read FTWA…VTSL, GKII…CITF, VLFM…LYPY, ILYW…FYSL, IIPA…IASA, VVAG…VYAV, GMFI…DLAF, FMAL…FVSV, VSWF…QELG, and VCIV…ILIL. Over residues 402-424 the composition is skewed to basic and acidic residues; sequence EEEKDEAERSKRKAEESDGKTTR. The segment at 402-431 is disordered; sequence EEEKDEAERSKRKAEESDGKTTRELTSGGL.

It belongs to the tellurite-resistance/dicarboxylate transporter (TDT) family.

It is found in the membrane. The polypeptide is Putative malic acid transport protein (Schizosaccharomyces pombe (strain 972 / ATCC 24843) (Fission yeast)).